Reading from the N-terminus, the 59-residue chain is UPF0509 protein KPN78578_12530 (59 aa).

This sequence belongs to the UPF0509 family.

The polypeptide is UPF0509 protein KPN78578_12530 (Klebsiella pneumoniae subsp. pneumoniae (strain ATCC 700721 / MGH 78578)).